The chain runs to 1020 residues: Glucan endo-1,3-beta-D-glucosidase (1020 aa).

The first 25 residues, methionine 1 to alanine 25, serve as a signal peptide directing secretion. The tract at residues histidine 28 to proline 251 is beta-sandwich subdomain. A GH81 domain is found at histidine 28–glycine 722. An alpha/beta subdomain region spans residues glutamate 252–threonine 350. Positions aspartate 360–glycine 722 are (alpha/beta)6 barrel subdomain. Tyrosine 387, lysine 391, histidine 458, aspartate 466, histidine 470, aspartate 530, asparagine 540, glutamate 542, glutamate 546, glutamate 699, and arginine 704 together coordinate (1,3-beta-D-glucosyl)n. Aspartate 466 is a catalytic residue. Active-site residues include glutamate 542 and glutamate 546. Positions histidine 771–aspartate 790 are disordered. The region spanning glutamate 796–arginine 922 is the CBM6 domain. Residues glutamate 812, tryptophan 825, aspartate 853, asparagine 878, aspartate 912, and asparagine 915 each coordinate (1,3-beta-D-glucosyl)n. The region spanning asparagine 928–arginine 1020 is the CBM56 domain.

The protein belongs to the glycosyl hydrolase 81 family.

The protein localises to the secreted. The catalysed reaction is Hydrolysis of (1-&gt;3)-beta-D-glucosidic linkages in (1-&gt;3)-beta-D-glucans.. Functionally, cleaves internal linkages in 1,3-beta-glucan. May contribute to plant biomass degradation. The protein is Glucan endo-1,3-beta-D-glucosidase of Halalkalibacterium halodurans (strain ATCC BAA-125 / DSM 18197 / FERM 7344 / JCM 9153 / C-125) (Bacillus halodurans).